A 427-amino-acid polypeptide reads, in one-letter code: UDP-N-acetylglucosamine 1-carboxyvinyltransferase (427 aa).

22 to 23 (KN) is a binding site for phosphoenolpyruvate. Arginine 99 is a UDP-N-acetyl-alpha-D-glucosamine binding site. Residue cysteine 123 is the Proton donor of the active site. 2-(S-cysteinyl)pyruvic acid O-phosphothioketal is present on cysteine 123. UDP-N-acetyl-alpha-D-glucosamine is bound by residues 128-132 (RPIDL), aspartate 313, and isoleucine 335.

It belongs to the EPSP synthase family. MurA subfamily.

Its subcellular location is the cytoplasm. It carries out the reaction phosphoenolpyruvate + UDP-N-acetyl-alpha-D-glucosamine = UDP-N-acetyl-3-O-(1-carboxyvinyl)-alpha-D-glucosamine + phosphate. It functions in the pathway cell wall biogenesis; peptidoglycan biosynthesis. Functionally, cell wall formation. Adds enolpyruvyl to UDP-N-acetylglucosamine. The polypeptide is UDP-N-acetylglucosamine 1-carboxyvinyltransferase (Sphingopyxis alaskensis (strain DSM 13593 / LMG 18877 / RB2256) (Sphingomonas alaskensis)).